The primary structure comprises 153 residues: NAD(P)H-quinone oxidoreductase subunit N (153 aa).

The protein belongs to the complex I NdhN subunit family. As to quaternary structure, NDH-1 can be composed of about 15 different subunits; different subcomplexes with different compositions have been identified which probably have different functions.

It is found in the cellular thylakoid membrane. The catalysed reaction is a plastoquinone + NADH + (n+1) H(+)(in) = a plastoquinol + NAD(+) + n H(+)(out). It carries out the reaction a plastoquinone + NADPH + (n+1) H(+)(in) = a plastoquinol + NADP(+) + n H(+)(out). Functionally, NDH-1 shuttles electrons from an unknown electron donor, via FMN and iron-sulfur (Fe-S) centers, to quinones in the respiratory and/or the photosynthetic chain. The immediate electron acceptor for the enzyme in this species is believed to be plastoquinone. Couples the redox reaction to proton translocation, and thus conserves the redox energy in a proton gradient. Cyanobacterial NDH-1 also plays a role in inorganic carbon-concentration. The protein is NAD(P)H-quinone oxidoreductase subunit N of Parasynechococcus marenigrum (strain WH8102).